A 512-amino-acid chain; its full sequence is GMP synthase [glutamine-hydrolyzing] (512 aa).

Positions 7–197 (TIIVLDFGSQ…VFGVCGCSEG (191 aa)) constitute a Glutamine amidotransferase type-1 domain. Cysteine 84 (nucleophile) is an active-site residue. Residues histidine 171 and glutamate 173 contribute to the active site. The 190-residue stretch at 198–387 (WNMENFIEVE…LGIPDEIVWR (190 aa)) folds into the GMPS ATP-PPase domain. 225–231 (SGGVDSS) contacts ATP.

As to quaternary structure, homodimer.

It carries out the reaction XMP + L-glutamine + ATP + H2O = GMP + L-glutamate + AMP + diphosphate + 2 H(+). The protein operates within purine metabolism; GMP biosynthesis; GMP from XMP (L-Gln route): step 1/1. Functionally, catalyzes the synthesis of GMP from XMP. The chain is GMP synthase [glutamine-hydrolyzing] from Bacillus mycoides (strain KBAB4) (Bacillus weihenstephanensis).